A 297-amino-acid polypeptide reads, in one-letter code: Aspartate carbamoyltransferase catalytic subunit (297 aa).

Residues Arg-48 and Thr-49 each contribute to the carbamoyl phosphate site. Lys-76 contributes to the L-aspartate binding site. Arg-98, His-129, and Gln-132 together coordinate carbamoyl phosphate. Residues Arg-162 and Arg-214 each coordinate L-aspartate. Carbamoyl phosphate contacts are provided by Ala-257 and Pro-258.

This sequence belongs to the aspartate/ornithine carbamoyltransferase superfamily. ATCase family. Heterododecamer (2C3:3R2) of six catalytic PyrB chains organized as two trimers (C3), and six regulatory PyrI chains organized as three dimers (R2).

The enzyme catalyses carbamoyl phosphate + L-aspartate = N-carbamoyl-L-aspartate + phosphate + H(+). It functions in the pathway pyrimidine metabolism; UMP biosynthesis via de novo pathway; (S)-dihydroorotate from bicarbonate: step 2/3. Its function is as follows. Catalyzes the condensation of carbamoyl phosphate and aspartate to form carbamoyl aspartate and inorganic phosphate, the committed step in the de novo pyrimidine nucleotide biosynthesis pathway. The polypeptide is Aspartate carbamoyltransferase catalytic subunit (Leuconostoc mesenteroides subsp. mesenteroides (strain ATCC 8293 / DSM 20343 / BCRC 11652 / CCM 1803 / JCM 6124 / NCDO 523 / NBRC 100496 / NCIMB 8023 / NCTC 12954 / NRRL B-1118 / 37Y)).